A 144-amino-acid polypeptide reads, in one-letter code: Large ribosomal subunit protein uL16 (144 aa).

The segment covering 1 to 17 has biased composition (basic residues); the sequence is MLQPKKTKFRRQQKGRA. The disordered stretch occupies residues 1–22; that stretch reads MLQPKKTKFRRQQKGRAKGNAQ.

It belongs to the universal ribosomal protein uL16 family. In terms of assembly, part of the 50S ribosomal subunit.

Functionally, binds 23S rRNA and is also seen to make contacts with the A and possibly P site tRNAs. This chain is Large ribosomal subunit protein uL16, found in Bacteroides fragilis (strain ATCC 25285 / DSM 2151 / CCUG 4856 / JCM 11019 / LMG 10263 / NCTC 9343 / Onslow / VPI 2553 / EN-2).